A 243-amino-acid chain; its full sequence is Orotidine 5'-phosphate decarboxylase (243 aa).

Substrate contacts are provided by residues aspartate 18, lysine 39, 66-75 (DLKFHDIPTT), threonine 130, arginine 192, glutamine 201, glycine 221, and arginine 222. Lysine 68 functions as the Proton donor in the catalytic mechanism.

This sequence belongs to the OMP decarboxylase family. Type 1 subfamily. In terms of assembly, homodimer.

It catalyses the reaction orotidine 5'-phosphate + H(+) = UMP + CO2. It functions in the pathway pyrimidine metabolism; UMP biosynthesis via de novo pathway; UMP from orotate: step 2/2. Its function is as follows. Catalyzes the decarboxylation of orotidine 5'-monophosphate (OMP) to uridine 5'-monophosphate (UMP). The sequence is that of Orotidine 5'-phosphate decarboxylase from Synechococcus sp. (strain CC9311).